The chain runs to 155 residues: RNA pyrophosphohydrolase (155 aa).

Positions 5 to 147 constitute a Nudix hydrolase domain; the sequence is KYRPNVAAII…KRQVYRQVIA (143 aa). Positions 42–63 match the Nudix box motif; the sequence is GGIDEGETPLEALHRELLEEIG.

Belongs to the Nudix hydrolase family. RppH subfamily. A divalent metal cation serves as cofactor.

Accelerates the degradation of transcripts by removing pyrophosphate from the 5'-end of triphosphorylated RNA, leading to a more labile monophosphorylated state that can stimulate subsequent ribonuclease cleavage. This is RNA pyrophosphohydrolase from Helicobacter pylori (strain HPAG1).